A 329-amino-acid chain; its full sequence is Interleukin-12 subunit beta (329 aa).

Positions 1-22 (MHPQQLVIAWLSLVLLAPPLMA) are cleaved as a signal peptide. One can recognise an Ig-like C2-type domain in the interval 23–106 (IWELEKNVYV…LSHSFLLIHK (84 aa)). Cysteines 50 and 90 form a disulfide. Residues N135 and N223 are each glycosylated (N-linked (GlcNAc...) asparagine). The Fibronectin type-III domain occupies 238-329 (PPKNLQLKPL…WSNWASVSCS (92 aa)).

It belongs to the IL-12B family. In terms of assembly, heterodimer with IL12A; disulfide-linked. The heterodimer is known as interleukin IL-12. Heterodimer with IL23A; disulfide-linked. The heterodimer is known as interleukin IL-23. Also secreted as a monomer. Interacts with NBR1; this interaction promotes IL-12 secretion.

The protein resides in the secreted. In terms of biological role, cytokine that can act as a growth factor for activated T and NK cells, enhance the lytic activity of NK/lymphokine-activated killer cells, and stimulate the production of IFN-gamma by resting PBMC. Its function is as follows. Associates with IL23A to form the IL-23 interleukin, a heterodimeric cytokine which functions in innate and adaptive immunity. IL-23 may constitute with IL-17 an acute response to infection in peripheral tissues. IL-23 binds to a heterodimeric receptor complex composed of IL12RB1 and IL23R, activates the Jak-Stat signaling cascade, stimulates memory rather than naive T-cells and promotes production of pro-inflammatory cytokines. IL-23 induces autoimmune inflammation and thus may be responsible for autoimmune inflammatory diseases and may be important for tumorigenesis. In Felis catus (Cat), this protein is Interleukin-12 subunit beta (IL12B).